The following is a 309-amino-acid chain: uncharacterized protein (309 aa).

This is an uncharacterized protein from Aquifex aeolicus (strain VF5).